The chain runs to 368 residues: Glutaminyl-peptide cyclotransferase (368 aa).

The N-terminal stretch at 1–23 (MARERRDSKAATFFCLAWALCLA) is a signal peptide. 2 N-linked (GlcNAc...) asparagine glycosylation sites follow: Asn53 and Asn65. Cys143 and Cys169 form a disulfide bridge. Asp164 is a binding site for Zn(2+). Catalysis depends on Glu207, which acts as the Proton acceptor. Glu208 is a Zn(2+) binding site. The active-site Proton acceptor is the Asp254. An N-linked (GlcNAc...) asparagine glycan is attached at Asn292. His336 provides a ligand contact to Zn(2+). N-linked (GlcNAc...) asparagine glycosylation is present at Asn352.

Belongs to the glutaminyl-peptide cyclotransferase family. In terms of tissue distribution, expressed by the venom gland.

The protein localises to the secreted. It carries out the reaction N-terminal L-glutaminyl-[peptide] = N-terminal 5-oxo-L-prolyl-[peptide] + NH4(+). Functionally, responsible for the biosynthesis of pyroglutamyl peptides. Has a bias against acidic and tryptophan residues adjacent to the N-terminal glutaminyl residue and a lack of importance of chain length after the second residue. Also catalyzes N-terminal pyroglutamate formation. The polypeptide is Glutaminyl-peptide cyclotransferase (QPCT) (Bothrops jararaca (Jararaca)).